Reading from the N-terminus, the 558-residue chain is MESSAGDPYRRPARRTQWLLSALAHHYGLDRGVENEIVVLATGLDQYLQEVFHHLDCRGAGRLPRADFRALCAVLGLNADGETATEDANSAEAASTNPAAGMIAGGDADVREEARLALRADPPELTFRQFHARLCGYFSSRAGPRLPRGALSEHIETQIRLRRPRRRRRPGSPSLHGGAYGERVAHLEEENSSLRELVEDLRAALQSSDARCLALQVGLWKSQSDIPEAAAHELQRAQGALAEAEARARRLQRGQVEVRLRTEEARQAVRRSLHRVRELEALARRVPCLQRQVQRLEAELRGYRSEGPQLLTPQQASPRPGNRNGEPTAGGTRDSDTTPEGVQRSDSRDTDEEDEQLFRSVEGQAASEEEEEERWQEKPGRPQAHGEVPLVQPSGCVSRCDDQTAETLKASFGHCDGAEHICTLELETHVTRLGEQLQTLGTPEEEAELQQMVEAEHLRLELQMVETERVRLSLLEEKLVDVLQLLQRLRDLNISKRALGKMLLNALDRNPSQEGTCGTLAILDTLHQALVGCELLQRNPSAPASTAPAHTNPFLISC.

Residues 43-78 (GLDQYLQEVFHHLDCRGAGRLPRADFRALCAVLGLN) form the EF-hand domain. Positions 161-170 (LRRPRRRRRP) are enriched in basic residues. 2 disordered regions span residues 161–183 (LRRPRRRRRPGSPSLHGGAYGER) and 304–395 (RSEG…QPSG). 2 coiled-coil regions span residues 179 to 304 (AYGE…RGYR) and 453 to 495 (VEAE…LNIS).

The sequence is that of EF-hand and coiled-coil domain-containing protein 1 (Efcc1) from Mus musculus (Mouse).